Reading from the N-terminus, the 259-residue chain is Trypsin (259 aa).

A signal peptide spans 1-32; sequence MKHFLRALKRCSVAVATVAIAVVGLQPVTASA. Residues 33–36 constitute a propeptide, activation peptide; sequence APNP. Residues 37-257 form the Peptidase S1 domain; that stretch reads VVGGTRAAQG…FASAIASAAR (221 aa). A disulfide bridge links Cys-58 with Cys-74. Active-site charge relay system residues include His-73 and Asp-118. Cystine bridges form between Cys-177–Cys-192 and Cys-204–Cys-233. Ser-208 (charge relay system) is an active-site residue.

The protein belongs to the peptidase S1 family.

It carries out the reaction Preferential cleavage: Arg-|-Xaa, Lys-|-Xaa.. The polypeptide is Trypsin (sprT) (Streptomyces griseus).